Consider the following 148-residue polypeptide: Probable histone H2B.2 (148 aa).

Residues 1–32 are compositionally biased toward basic and acidic residues; the sequence is MAPKGEKKPAEKKPAEEKKSTVAEKAPAEKKP. Residues 1 to 57 are disordered; that stretch reads MAPKGEKKPAEKKPAEEKKSTVAEKAPAEKKPKAGKKLPKEGGSAAGEKKKKRSKKS. N6-acetyllysine is present on residues K7, K36, and K37. K144 is covalently cross-linked (Glycyl lysine isopeptide (Lys-Gly) (interchain with G-Cter in ubiquitin)).

The protein belongs to the histone H2B family. The nucleosome is a histone octamer containing two molecules each of H2A, H2B, H3 and H4 assembled in one H3-H4 heterotetramer and two H2A-H2B heterodimers. The octamer wraps approximately 147 bp of DNA. In terms of processing, can be acetylated to form H2BK6ac, H2BK33ac and H2BK34ac. Monoubiquitinated to form H2BK143ub1; may give a specific tag for epigenetic transcriptional activation.

It is found in the nucleus. The protein resides in the chromosome. Its function is as follows. Core component of nucleosome. Nucleosomes wrap and compact DNA into chromatin, limiting DNA accessibility to the cellular machineries which require DNA as a template. Histones thereby play a central role in transcription regulation, DNA repair, DNA replication and chromosomal stability. DNA accessibility is regulated via a complex set of post-translational modifications of histones, also called histone code, and nucleosome remodeling. In Medicago truncatula (Barrel medic), this protein is Probable histone H2B.2.